The following is a 153-amino-acid chain: Ribosome maturation factor RimP (153 aa).

Belongs to the RimP family.

Its subcellular location is the cytoplasm. Required for maturation of 30S ribosomal subunits. This chain is Ribosome maturation factor RimP, found in Coxiella burnetii (strain CbuK_Q154) (Coxiella burnetii (strain Q154)).